A 92-amino-acid polypeptide reads, in one-letter code: MANTTSAKKATRKIARRTDVNKARRSRVRTFVRQVEEAIASGDAAKAKEAFLAAQPELARAASKGVLHANTASRKVSRLAARVKALSVTTTA.

Positions 1-23 are disordered; that stretch reads MANTTSAKKATRKIARRTDVNKA.

Belongs to the bacterial ribosomal protein bS20 family.

Binds directly to 16S ribosomal RNA. In Rhizobium leguminosarum bv. trifolii (strain WSM2304), this protein is Small ribosomal subunit protein bS20.